The following is an 859-amino-acid chain: Mycobactin import ATP-binding/permease protein IrtA (859 aa).

The Cytoplasmic segment spans residues Met-1–Pro-292. In terms of domain architecture, FAD-binding FR-type spans Ala-15–Asp-122. FAD is bound by residues Arg-70–Thr-73, Asp-87–His-91, and Ala-97–Ser-98. The disordered stretch occupies residues His-247–Ser-267. The chain crosses the membrane as a helical span at residues Leu-293–Leu-313. The ABC transmembrane type-1 domain occupies Leu-293–Thr-575. The Periplasmic segment spans residues Leu-314–Gly-334. A helical membrane pass occupies residues Phe-335–Leu-355. Residues His-356–Ala-408 are Cytoplasmic-facing. A helical transmembrane segment spans residues Val-409–Val-429. At Asp-430–Arg-432 the chain is on the periplasmic side. A helical transmembrane segment spans residues Val-433–Ile-453. Residues Gln-454–Asp-519 lie on the Cytoplasmic side of the membrane. The chain crosses the membrane as a helical span at residues Leu-520–Ala-540. The Periplasmic segment spans residues Thr-541 to Asn-548. A helical transmembrane segment spans residues Leu-549 to Gly-569. The Cytoplasmic segment spans residues Leu-570–Arg-859. The ABC transporter domain maps to Val-610–Thr-843. Gly-643 to Ser-650 serves as a coordination point for ATP.

This sequence belongs to the ABC transporter superfamily. Siderophore-Fe(3+) uptake transporter (SIUT) (TC 3.A.1.21) family. In terms of assembly, forms a heterodimer with IrtB. The cofactor is FAD.

Its subcellular location is the cell inner membrane. Part of the ABC transporter complex IrtAB involved in the import of iron-bound mycobactin (Fe-MBT) and carboxymycobactin (Fe-cMBT). Mycobactins are then reduced by the siderophore interaction domain to facilitate iron release in the bacterial cell. Transmembrane domains (TMD) form a pore in the membrane and the ATP-binding domain (NBD) is responsible for energy generation. Required for replication in human macrophages and in mouse lungs. The chain is Mycobactin import ATP-binding/permease protein IrtA (irtA) from Mycobacterium tuberculosis (strain ATCC 25618 / H37Rv).